Here is a 359-residue protein sequence, read N- to C-terminus: Lipopolysaccharide 1,6-galactosyltransferase (359 aa).

Residues glutamine 244 and glutamate 276 each coordinate UDP.

It belongs to the glycosyltransferase group 1 family. Glycosyltransferase 4 subfamily.

The catalysed reaction is alpha-D-Glc-(1-&gt;3)-[L-alpha-D-Hep-(1-&gt;7)]-4-O-PO3(2-)-L-alpha-D-Hep-(1-&gt;3)-4-O-PO3(2-)-L-alpha-D-Hep-(1-&gt;5)-[alpha-Kdo-(2-&gt;4)]-alpha-Kdo-(2-&gt;6)-lipid A + UDP-alpha-D-galactose = alpha-D-Gal-(1-&gt;6)-alpha-D-Glc-(1-&gt;3)-[L-alpha-D-Hep-(1-&gt;7)]-4-O-PO3(2-)-L-alpha-D-Hep-(1-&gt;3)-4-O-PO3(2-)-L-alpha-D-Hep-(1-&gt;5)-[alpha-Kdo-(2-&gt;4)]-alpha-Kdo-(2-&gt;6)-lipid A + UDP + H(+). It functions in the pathway bacterial outer membrane biogenesis; LPS core biosynthesis. Galactosyltransferase involved in the biosynthesis of the core oligosaccharide region of lipopolysaccharide (LPS). Catalyzes the addition of galactose from UDP-galactose to the first glucose residue of the LPS outer core. This is Lipopolysaccharide 1,6-galactosyltransferase from Salmonella typhimurium (strain LT2 / SGSC1412 / ATCC 700720).